The sequence spans 487 residues: Cytochrome c-552 (487 aa).

An N-terminal signal peptide occupies residues 1–27 (MSKKWTRNTAAMAAILSALCLSTNALA). His-104 contacts heme c. Residues Cys-132, Cys-135, and Lys-136 each coordinate heme. Positions 170, 173, 174, 219, 222, and 223 each coordinate heme c. Residues Glu-225, Tyr-226, Lys-271, and Gln-273 each contribute to the Ca(2+) site. Position 226 (Tyr-226) interacts with substrate. Residue His-274 participates in substrate binding. Residues His-285, Cys-292, Cys-295, His-296, His-311, Cys-324, Cys-327, His-328, and His-403 each coordinate heme c.

The protein belongs to the cytochrome c-552 family. Requires Ca(2+) as cofactor. Heme c is required as a cofactor.

Its subcellular location is the periplasm. The enzyme catalyses 6 Fe(III)-[cytochrome c] + NH4(+) + 2 H2O = 6 Fe(II)-[cytochrome c] + nitrite + 8 H(+). The protein operates within nitrogen metabolism; nitrate reduction (assimilation). In terms of biological role, catalyzes the reduction of nitrite to ammonia, consuming six electrons in the process. The polypeptide is Cytochrome c-552 (Photobacterium profundum (strain SS9)).